We begin with the raw amino-acid sequence, 70 residues long: Small ribosomal subunit protein bS21 (70 aa).

This sequence belongs to the bacterial ribosomal protein bS21 family.

The protein is Small ribosomal subunit protein bS21 of Neisseria gonorrhoeae (strain ATCC 700825 / FA 1090).